Consider the following 152-residue polypeptide: Single-stranded DNA-binding protein, mitochondrial (152 aa).

The N-terminal 16 residues, 1 to 16 (MFRRPVLQVFRQFVRH), are a transit peptide targeting the mitochondrion. One can recognise an SSB domain in the interval 30 to 141 (LNRVQLLGRV…IIAGKKLVVH (112 aa)). S67 and S79 each carry phosphoserine. An N6-acetyllysine modification is found at K113. The residue at position 122 (K122) is an N6-succinyllysine.

In terms of assembly, homotetramer. Interacts with MPG/AAG, through inhibition of its glycosylase activity it potentially prevents formation of DNA breaks in ssDNA, ensuring that base removal primarily occurs in dsDNA. Interacts with POLDIP2. Interacts with PRIMPOL. As to expression, expressed in all the layers of the retina (at protein level).

The protein localises to the mitochondrion. It is found in the mitochondrion matrix. The protein resides in the mitochondrion nucleoid. In terms of biological role, binds preferentially and cooperatively to pyrimidine rich single-stranded DNA (ss-DNA). In vitro, required to maintain the copy number of mitochondrial DNA (mtDNA) and plays a crucial role during mtDNA replication by stimulating the activity of the replisome components POLG and TWNK at the replication fork. Promotes the activity of the gamma complex polymerase POLG, largely by organizing the template DNA and eliminating secondary structures to favor ss-DNA conformations that facilitate POLG activity. In addition it is able to promote the 5'-3' unwinding activity of the mtDNA helicase TWNK. May also function in mtDNA repair. The sequence is that of Single-stranded DNA-binding protein, mitochondrial (Ssbp1) from Mus musculus (Mouse).